The sequence spans 609 residues: COP9 signalosome complex subunit 5 (609 aa).

The 141-residue stretch at 75–215 (CYISSLALMK…IGAFRTYPEG (141 aa)) folds into the MPN domain. Zn(2+) contacts are provided by H161, H163, and D174. The JAMM motif signature appears at 161–174 (HSHPGYGCWLSGID). Disordered stretches follow at residues 210–248 (RTYP…LPKS) and 381–456 (TTTK…EVDS). The segment covering 214-224 (EGSQQQPSMTN) has biased composition (polar residues). Acidic residues-rich tracts occupy residues 392–404 (TDID…DESD), 420–431 (SDDDDEEEEGEG), and 445–456 (EVEEGPTDEVDS).

The protein belongs to the peptidase M67A family. CSN5 subfamily. As to quaternary structure, component of the COP9 signalosome (CSN) complex.

It localises to the cytoplasm. It is found in the nucleus. In terms of biological role, catalytic Component of the COP9 signalosome (CSN) complex that acts as an regulator of the ubiquitin (Ubl) conjugation pathway by mediating the deneddylation of the cullin subunit of SCF-type E3 ubiquitin-protein ligase complexes. The sequence is that of COP9 signalosome complex subunit 5 (JAB1) from Candida albicans (strain SC5314 / ATCC MYA-2876) (Yeast).